The primary structure comprises 331 residues: GTP 3',8-cyclase (331 aa).

Residues 9-233 (PFGRRITYLR…VRSSKVTGGP (225 aa)) form the Radical SAM core domain. GTP is bound at residue arginine 18. Positions 25 and 29 each coordinate [4Fe-4S] cluster. Tyrosine 31 provides a ligand contact to S-adenosyl-L-methionine. Cysteine 32 lines the [4Fe-4S] cluster pocket. Arginine 67 lines the GTP pocket. Position 71 (glycine 71) interacts with S-adenosyl-L-methionine. Residue threonine 98 coordinates GTP. Serine 122 serves as a coordination point for S-adenosyl-L-methionine. Lysine 159 provides a ligand contact to GTP. An S-adenosyl-L-methionine-binding site is contributed by methionine 193. The [4Fe-4S] cluster site is built by cysteine 257 and cysteine 260. 262 to 264 (RVR) lines the GTP pocket. Position 274 (cysteine 274) interacts with [4Fe-4S] cluster.

It belongs to the radical SAM superfamily. MoaA family. As to quaternary structure, monomer and homodimer. [4Fe-4S] cluster is required as a cofactor.

The enzyme catalyses GTP + AH2 + S-adenosyl-L-methionine = (8S)-3',8-cyclo-7,8-dihydroguanosine 5'-triphosphate + 5'-deoxyadenosine + L-methionine + A + H(+). The protein operates within cofactor biosynthesis; molybdopterin biosynthesis. Catalyzes the cyclization of GTP to (8S)-3',8-cyclo-7,8-dihydroguanosine 5'-triphosphate. The protein is GTP 3',8-cyclase of Ectopseudomonas mendocina (strain ymp) (Pseudomonas mendocina).